The chain runs to 844 residues: NADPH-Fe(3+) oxidoreductase subunit alpha (844 aa).

In terms of domain architecture, 2Fe-2S ferredoxin-type spans 1–78; that stretch reads MVSLTIDGKD…GIKVTTQSEK (78 aa). C34, C45, C48, and C62 together coordinate [2Fe-2S] cluster. The 4Fe-4S His(Cys)3-ligated-type domain maps to 78–117; that stretch reads KLSRIRQKIMELMLVNHPLDCPVCDAGGECDLQNACYGLG. The [4Fe-4S] cluster site is built by H94, C98, C101, C107, C146, C149, C152, C186, C189, C192, C196, C222, C225, C229, and C256. 2 consecutive 4Fe-4S ferredoxin-type domains span residues 137-168 and 177-206; these read PLIE…IRVV and DTVD…SKPF. Positions 215 to 270 constitute a 4Fe-4S Mo/W bis-MGD-type domain; sequence FTTTPSVCPFCATGCQIEYHSRNGRVERVTSDDSTYNSGNLCINGRFGYSYINSPD.

Heterotetramer with 2 beta subunits. The cofactor is [4Fe-4S] cluster.

It localises to the cell inner membrane. Its activity is regulated as follows. Not regulated by FAD or FMN. Functionally, the SfrAB enzymatic complex is probably involved in acetate metabolism and does not participate directly in the reduction of Fe(3+) chelates. May serve as a major route for NADP regeneration. In Geobacter sulfurreducens (strain DL-1 / KN400), this protein is NADPH-Fe(3+) oxidoreductase subunit alpha (sfrA).